Consider the following 192-residue polypeptide: Elongation factor P (192 aa).

Residues 133 to 157 (EVTETTPGVKGDTAQGGDKPATLES) form a disordered region.

This sequence belongs to the elongation factor P family.

The protein localises to the cytoplasm. The protein operates within protein biosynthesis; polypeptide chain elongation. Its function is as follows. Involved in peptide bond synthesis. Stimulates efficient translation and peptide-bond synthesis on native or reconstituted 70S ribosomes in vitro. Probably functions indirectly by altering the affinity of the ribosome for aminoacyl-tRNA, thus increasing their reactivity as acceptors for peptidyl transferase. The polypeptide is Elongation factor P (Salinibacter ruber (strain DSM 13855 / M31)).